The sequence spans 379 residues: MNALHFGAGNIGRGFIGKLLADSGVFVTFADINQTQIDQINQNKQYGVKIVGDASRVEVVKNIAAINSKDEEAVIEQVKSVELITTAVGPNVLGFIAPLFAKALAARLEAGNTQPLNIIACENMVRGTSFFKAKIFENLTDSQQAEIEKFVGFVDSAVDRIVPPAELNEADPLEVTVEEFSEWIVDKTQFKGQIPDIKGMELTDNLMAFVERKLFTLNTGHLISAYLGKQAGVKWIKEAIAIDSVKAAVKATMEESGAVLIKRYNFDPQAHAAYIEKILKRFANPYLNDDVNRVGREPIRKLSPNDRLIKPLLGTLEYGLPHKNLVNGVVMALQYRNEEDPQAVELAQFIADNGVAAAVEKYTGLTNQEVIDQVVALYN.

3–14 (ALHFGAGNIGRG) contributes to the NAD(+) binding site.

The protein belongs to the mannitol dehydrogenase family.

The enzyme catalyses D-mannitol 1-phosphate + NAD(+) = beta-D-fructose 6-phosphate + NADH + H(+). The polypeptide is Mannitol-1-phosphate 5-dehydrogenase (Actinobacillus pleuropneumoniae serotype 5b (strain L20)).